The primary structure comprises 222 residues: MLMMLMMIIGITGGSGAGKTTLTQNIKEIFGEDVSVICQDNYYKDRSHYTPEERANLIWDHPDAFDNDLLISDIKRLKNNEIVQAPVFDFVLGNRSKTEIETIYPSKVILVEGILVFENQELRDLMDIRIFVDTDADERILRRMVRDVQEQGDSVDCIMSRYLSMVKPMHEKFIEPTRKYADIIVHGNYRQNVVTNILSQKIKNHLENALESDETYYMVNSK.

13–20 provides a ligand contact to ATP; that stretch reads GGSGAGKT.

Belongs to the uridine kinase family.

The protein resides in the cytoplasm. It carries out the reaction uridine + ATP = UMP + ADP + H(+). The catalysed reaction is cytidine + ATP = CMP + ADP + H(+). Its pathway is pyrimidine metabolism; CTP biosynthesis via salvage pathway; CTP from cytidine: step 1/3. It participates in pyrimidine metabolism; UMP biosynthesis via salvage pathway; UMP from uridine: step 1/1. The sequence is that of Uridine kinase from Chlamydia pneumoniae (Chlamydophila pneumoniae).